The sequence spans 623 residues: UvrABC system protein C (623 aa).

In terms of domain architecture, GIY-YIG spans 27–105 (GSPGVYRMLD…IKQLKPRYNV (79 aa)). In terms of domain architecture, UVR spans 215–250 (TKVQANLAEQMQAASEAMEFERAAALRDRIKALTQV).

Belongs to the UvrC family. In terms of assembly, interacts with UvrB in an incision complex.

It localises to the cytoplasm. The UvrABC repair system catalyzes the recognition and processing of DNA lesions. UvrC both incises the 5' and 3' sides of the lesion. The N-terminal half is responsible for the 3' incision and the C-terminal half is responsible for the 5' incision. In Cereibacter sphaeroides (strain ATCC 17023 / DSM 158 / JCM 6121 / CCUG 31486 / LMG 2827 / NBRC 12203 / NCIMB 8253 / ATH 2.4.1.) (Rhodobacter sphaeroides), this protein is UvrABC system protein C.